Consider the following 344-residue polypeptide: TATA box-binding protein-like 2 (344 aa).

A disordered region spans residues 78 to 143 (NKDRTVTGNK…SNQLSSETPN (66 aa)). A compositionally biased stretch (low complexity) spans 110-120 (GSGLNLNSNSS). Polar residues predominate over residues 134–143 (SNQLSSETPN).

Belongs to the TBP family. Interacts with TAF3.

It is found in the cytoplasm. The protein resides in the nucleus. Functionally, transcription factor required in complex with TAF3 for the differentiation of myoblasts into myocytes. The complex replaces TFIID at specific promoters at an early stage in the differentiation process. The sequence is that of TATA box-binding protein-like 2 from Rattus norvegicus (Rat).